We begin with the raw amino-acid sequence, 63 residues long: Arabinogalactan peptide 3 (63 aa).

Positions 1–26 are cleaved as a signal peptide; it reads MASRILYAAAVVAAVAVSSLAGVAYA. The GPI-anchor amidated serine moiety is linked to residue Ser36. The propeptide at 37–63 is removed in mature form; sequence GAAAVSSSLVAAVLCPAVALLLGNLRQ.

It belongs to the AG-peptide AGP family. O-glycosylated on hydroxyprolines; noncontiguous hydroxylproline residues are glycosylated with arabinogalactan. Expressed in roots, stems, leaves, flowers and seeds.

It is found in the vacuole. The protein localises to the aleurone grain membrane. Functionally, proteoglycan that seems to be implicated in diverse developmental roles such as differentiation, cell-cell recognition, embryogenesis and programmed cell death. This is Arabinogalactan peptide 3 (AGPEP3) from Oryza sativa subsp. japonica (Rice).